A 258-amino-acid polypeptide reads, in one-letter code: Tropinone reductase-like 3 (258 aa).

NAD(+) is bound at residue 19–43; sequence IVTASTQGIGFAIAYRLGLEGAAVV. Residue S150 coordinates substrate. Y163 (proton acceptor) is an active-site residue.

Belongs to the short-chain dehydrogenases/reductases (SDR) family.

Has no tropinone reductase activity. This chain is Tropinone reductase-like 3, found in Erythroxylum coca (Coca plant).